Here is a 264-residue protein sequence, read N- to C-terminus: MEQYLELCRHVLEHGTERSDRTGTGTISVFGYQMRFDLQEGFPVVTTKKLHLRSIIHELLWFLKGETNIAYLQENGVRIWNEWADENGELGPVYGKQWRSWEGANGKTVDQISQVVEAIKHQPDSRRLIVSAWNAAEIEDMALAPCHCLFQFYVQDGKLSCQLYQRSADIFLGVPFNIASYALLTKMIAQVCDLEEGEFVHTFGDAHIYLNHIEQVKLQLTREPRPLPEMRLNPEVRSLFDFTFDDFELVGYDPHPHIKGEVSV.

Residue arginine 21 participates in dUMP binding. Histidine 51 serves as a coordination point for (6R)-5,10-methylene-5,6,7,8-tetrahydrofolate. A dUMP-binding site is contributed by 126–127 (RR). Cysteine 146 (nucleophile) is an active-site residue. Residues 166–169 (RSAD), asparagine 177, and 207–209 (HIY) contribute to the dUMP site. Aspartate 169 contributes to the (6R)-5,10-methylene-5,6,7,8-tetrahydrofolate binding site. Serine 263 contacts (6R)-5,10-methylene-5,6,7,8-tetrahydrofolate.

This sequence belongs to the thymidylate synthase family. Bacterial-type ThyA subfamily. Homodimer.

The protein resides in the cytoplasm. The catalysed reaction is dUMP + (6R)-5,10-methylene-5,6,7,8-tetrahydrofolate = 7,8-dihydrofolate + dTMP. Its pathway is pyrimidine metabolism; dTTP biosynthesis. Catalyzes the reductive methylation of 2'-deoxyuridine-5'-monophosphate (dUMP) to 2'-deoxythymidine-5'-monophosphate (dTMP) while utilizing 5,10-methylenetetrahydrofolate (mTHF) as the methyl donor and reductant in the reaction, yielding dihydrofolate (DHF) as a by-product. This enzymatic reaction provides an intracellular de novo source of dTMP, an essential precursor for DNA biosynthesis. The chain is Thymidylate synthase from Halalkalibacterium halodurans (strain ATCC BAA-125 / DSM 18197 / FERM 7344 / JCM 9153 / C-125) (Bacillus halodurans).